A 1028-amino-acid chain; its full sequence is Pro-apoptotic serine protease nma111 (1028 aa).

The segment at 1-46 (MDLNGETSTKRKRSSVAAPAERPAKHLKPGNSTLTPGDATPANGTV) is disordered. Residues 82 to 266 (VVSIHFCQTC…AATDYFLPLD (185 aa)) form a serine protease region. Residues His-120, Asp-151, and Ser-233 each act as charge relay system in the active site. PDZ domains follow at residues 289-374 (QWIL…LLVQ) and 876-957 (VFCG…VTFD). Residues 991 to 1001 (SHERDRHKDGI) are compositionally biased toward basic and acidic residues. The tract at residues 991 to 1028 (SHERDRHKDGITPDAANLNPDAMDEVYEEVSDVEPEVD) is disordered. The segment covering 1012-1028 (AMDEVYEEVSDVEPEVD) has biased composition (acidic residues).

The protein belongs to the peptidase S1C family.

The protein localises to the nucleus. Nuclear serine protease which mediates apoptosis. This chain is Pro-apoptotic serine protease nma111 (nma111), found in Aspergillus fumigatus (strain ATCC MYA-4609 / CBS 101355 / FGSC A1100 / Af293) (Neosartorya fumigata).